The chain runs to 513 residues: ATP synthase subunit alpha (513 aa).

Position 169–176 (169–176 (GDRQTGKT)) interacts with ATP.

The protein belongs to the ATPase alpha/beta chains family. F-type ATPases have 2 components, CF(1) - the catalytic core - and CF(0) - the membrane proton channel. CF(1) has five subunits: alpha(3), beta(3), gamma(1), delta(1), epsilon(1). CF(0) has three main subunits: a(1), b(2) and c(9-12). The alpha and beta chains form an alternating ring which encloses part of the gamma chain. CF(1) is attached to CF(0) by a central stalk formed by the gamma and epsilon chains, while a peripheral stalk is formed by the delta and b chains.

The protein resides in the cell inner membrane. The enzyme catalyses ATP + H2O + 4 H(+)(in) = ADP + phosphate + 5 H(+)(out). In terms of biological role, produces ATP from ADP in the presence of a proton gradient across the membrane. The alpha chain is a regulatory subunit. The chain is ATP synthase subunit alpha from Vesicomyosocius okutanii subsp. Calyptogena okutanii (strain HA).